The primary structure comprises 601 residues: A-type ATP synthase subunit A (601 aa).

236–243 (GPFGSGKT) provides a ligand contact to ATP.

This sequence belongs to the ATPase alpha/beta chains family. Has multiple subunits with at least A(3), B(3), C, D, E, F, H, I and proteolipid K(x).

It localises to the cell membrane. It carries out the reaction ATP + H2O + 4 H(+)(in) = ADP + phosphate + 5 H(+)(out). Its function is as follows. Component of the A-type ATP synthase that produces ATP from ADP in the presence of a proton gradient across the membrane. The A chain is the catalytic subunit. This is A-type ATP synthase subunit A from Hyperthermus butylicus (strain DSM 5456 / JCM 9403 / PLM1-5).